The sequence spans 321 residues: Phospholipid phosphatase-related protein type 5 (321 aa).

Transmembrane regions (helical) follow at residues 6–26, 62–82, 122–142, 196–213, 225–245, and 252–272; these read VALI…TVML, AVPP…VIIV, FLGI…AGQV, AALS…ITST, VLCL…VAEY, and VIAG…CVVN.

This sequence belongs to the PA-phosphatase related phosphoesterase family.

It is found in the cell membrane. Induces filopodia formation and promotes neurite growth in a CDC42-independent manner; impedes neurite growth inhibitory-mediated axonal retraction. This is Phospholipid phosphatase-related protein type 5 from Mus musculus (Mouse).